A 366-amino-acid chain; its full sequence is MMDEQGLDGMQILPGSQDSFSELWASVQTPSIATIAEEFDDHLGNLLQNGFDMNLFELPPEMVAKDSVTPPSSTVPVVTDYPGEYGFQLRFQKSGTAKSVTSTFSELLKKLYCQLAKTSPVEVLLSKEPPQGAVLRATAVYKKTEHVADVVRRCPHHQTEDTAEHRSHLIRLEGSQRALYFEDPHTKRQSVTVPYEPPQLGSETTAILLSFMCNSSCMGGMNRRQILTILTLETPDGLVLGRRCFEVRVCACPGRDRKTDEESSTKTPNGPKQTKKRKQAPSNSAPHTTTVMKSKSSSSAEEEDKEVFTVLVKGRERYEIIKKINEAFEGAAEKEKAKNKVAVKQELPVPSSGKRLVQRGERSDSD.

Positions 1–41 (MMDEQGLDGMQILPGSQDSFSELWASVQTPSIATIAEEFDD) are transcription activation (acidic). A DNA-binding region spans residues 80–267 (DYPGEYGFQL…KTDEESSTKT (188 aa)). 4 residues coordinate Zn(2+): C154, H157, C213, and C217. Residues 248-255 (RVCACPGR) form an interaction with DNA region. Positions 255–264 (RDRKTDEESS) are enriched in basic and acidic residues. Residues 255 to 305 (RDRKTDEESSTKTPNGPKQTKKRKQAPSNSAPHTTTVMKSKSSSSAEEEDK) are disordered. A Bipartite nuclear localization signal motif is present at residues 275 to 295 (KKRKQAPSNSAPHTTTVMKSK). The segment covering 280–292 (APSNSAPHTTTVM) has biased composition (polar residues). The tract at residues 305 to 336 (KEVFTVLVKGRERYEIIKKINEAFEGAAEKEK) is oligomerization. The short motif at 319–330 (EIIKKINEAFEG) is the Nuclear export signal element. Residues 332–366 (AEKEKAKNKVAVKQELPVPSSGKRLVQRGERSDSD) form a disordered region. The interval 341–362 (VAVKQELPVPSSGKRLVQRGER) is basic (repression of DNA-binding).

This sequence belongs to the p53 family. Binds DNA as a homotetramer. The cofactor is Zn(2+).

Its subcellular location is the cytoplasm. It is found in the nucleus. In terms of biological role, multifunctional transcription factor that induces cell cycle arrest, DNA repair or apoptosis upon binding to its target DNA sequence. Acts as a tumor suppressor in many tumor types; induces growth arrest or apoptosis depending on the physiological circumstances and cell type. Negatively regulates cell division by controlling expression of a set of genes required for this process. One of the activated genes is an inhibitor of cyclin-dependent kinases. Apoptosis induction seems to be mediated either by stimulation of BAX and FAS antigen expression, or by repression of Bcl-2 expression. This Platichthys flesus (European flounder) protein is Cellular tumor antigen p53 (tp53).